Consider the following 553-residue polypeptide: Muellerian-inhibiting factor (553 aa).

The signal sequence occupies residues M1–A22. Positions D23–R445 are excised as a propeptide. 2 N-linked (GlcNAc...) asparagine glycosylation sites follow: N325 and N409. Cystine bridges form between C455/C519, C481/C550, and C485/C552.

The protein belongs to the TGF-beta family. As to quaternary structure, homodimer; disulfide-linked. In terms of processing, preproprotein is proteolytically processed to generate N- and C-terminal cleavage products that homodimerize and associate to form a biologically active non-covalent complex. Binding of the non-covalent complex to AMHR2 induces dissociation of the pro-region from the mature C-terminal dimer. The N-terminal portion of the protein, despite having no intrinsic activity, has the role of amplifying the activity of the C-terminus. As to expression, mainly expressed in granulosa cells from preantral and small antral follicles.

Its subcellular location is the secreted. Functionally, plays an important role in several reproductive functions. Induces Muellerian duct regression during male fetal sexual differentiation and plays a role in Leydig cell differentiation and function. In female acts as a negative regulator of the primordial to primary follicle transition and decreases FSH sensitivity of growing follicles. AMH signals by binding to a specific type-II receptor, AMHR2, that heterodimerizes with type-I receptors (ACVR1 and BMPR1A), and recruiting SMAD proteins that are translocated to the nucleus to regulate target gene expression. This Rattus norvegicus (Rat) protein is Muellerian-inhibiting factor (Amh).